A 235-amino-acid chain; its full sequence is MEEGKQEASMPLVPIDSFSYSWLVNFPSLEATIDDHHQTYEDSSSSSSFIEMDPRLPPSRRFFIKTSHESSFKFDNFVSFSDEDHSLVHADELFRDGYVMPYRLKPTSAATEEESEPLDTTTSEKIDTRGLNSKPSPTSSRKLRRVSKWVLLKYLDFLTPLCKRLRRCRSAVTTGSIGMDSRIRVTTSCRSRVYSDEMTSSPRISVADDYYWRRSCDSESSIYEAVLHCKKSFEK.

The disordered stretch occupies residues 108–140 (SAATEEESEPLDTTTSEKIDTRGLNSKPSPTSS). Positions 130–140 (GLNSKPSPTSS) are enriched in polar residues.

Its subcellular location is the cell membrane. May be involved in abscisic acid signaling by acting as a kinase regulator. This chain is Probable membrane-associated kinase regulator 6 (MAKR6), found in Arabidopsis thaliana (Mouse-ear cress).